Here is a 235-residue protein sequence, read N- to C-terminus: Aspartate/glutamate leucyltransferase (235 aa).

Belongs to the R-transferase family. Bpt subfamily.

The protein localises to the cytoplasm. The enzyme catalyses N-terminal L-glutamyl-[protein] + L-leucyl-tRNA(Leu) = N-terminal L-leucyl-L-glutamyl-[protein] + tRNA(Leu) + H(+). The catalysed reaction is N-terminal L-aspartyl-[protein] + L-leucyl-tRNA(Leu) = N-terminal L-leucyl-L-aspartyl-[protein] + tRNA(Leu) + H(+). Functions in the N-end rule pathway of protein degradation where it conjugates Leu from its aminoacyl-tRNA to the N-termini of proteins containing an N-terminal aspartate or glutamate. The polypeptide is Aspartate/glutamate leucyltransferase (Pseudomonas putida (strain ATCC 47054 / DSM 6125 / CFBP 8728 / NCIMB 11950 / KT2440)).